We begin with the raw amino-acid sequence, 399 residues long: Succinate--CoA ligase [ADP-forming] subunit beta (399 aa).

The region spanning Lys-9 to Glu-254 is the ATP-grasp domain. Residues Lys-46, Gly-53 to Gly-55, Val-112, and Glu-117 contribute to the ATP site. Mg(2+)-binding residues include Asn-209 and Asp-223. Substrate-binding positions include Asn-274 and Gly-331–Met-333.

Belongs to the succinate/malate CoA ligase beta subunit family. Heterotetramer of two alpha and two beta subunits. Mg(2+) is required as a cofactor.

The enzyme catalyses succinate + ATP + CoA = succinyl-CoA + ADP + phosphate. The catalysed reaction is GTP + succinate + CoA = succinyl-CoA + GDP + phosphate. Its pathway is carbohydrate metabolism; tricarboxylic acid cycle; succinate from succinyl-CoA (ligase route): step 1/1. Succinyl-CoA synthetase functions in the citric acid cycle (TCA), coupling the hydrolysis of succinyl-CoA to the synthesis of either ATP or GTP and thus represents the only step of substrate-level phosphorylation in the TCA. The beta subunit provides nucleotide specificity of the enzyme and binds the substrate succinate, while the binding sites for coenzyme A and phosphate are found in the alpha subunit. This Novosphingobium aromaticivorans (strain ATCC 700278 / DSM 12444 / CCUG 56034 / CIP 105152 / NBRC 16084 / F199) protein is Succinate--CoA ligase [ADP-forming] subunit beta.